An 81-amino-acid polypeptide reads, in one-letter code: MATSGRLLCLCLVLGLIFESLGHPVMGEKRAGENASPSARSLPKRLGNVEAPCGNQTCQFGCCEDDVCRELNCEHVDFPNY.

The first 21 residues, 1-21, serve as a signal peptide directing secretion; it reads MATSGRLLCLCLVLGLIFESL. A propeptide spanning residues 22–45 is cleaved from the precursor; that stretch reads GHPVMGEKRAGENASPSARSLPKR.

This sequence belongs to the teretoxin M (TM) superfamily. Contains 3 disulfide bonds. Expressed by the venom duct.

It is found in the secreted. The protein is Teretoxin Tsu6.8 of Terebra subulata (Chocolate spotted auger).